Here is an 860-residue protein sequence, read N- to C-terminus: Alanine--tRNA ligase (860 aa).

Zn(2+)-binding residues include His-563, His-567, Cys-665, and His-669. A disordered region spans residues 824–843 (VGGKGGGRPDMAQAGGTDSS).

It belongs to the class-II aminoacyl-tRNA synthetase family. It depends on Zn(2+) as a cofactor.

It is found in the cytoplasm. The enzyme catalyses tRNA(Ala) + L-alanine + ATP = L-alanyl-tRNA(Ala) + AMP + diphosphate. Functionally, catalyzes the attachment of alanine to tRNA(Ala) in a two-step reaction: alanine is first activated by ATP to form Ala-AMP and then transferred to the acceptor end of tRNA(Ala). Also edits incorrectly charged Ser-tRNA(Ala) and Gly-tRNA(Ala) via its editing domain. The sequence is that of Alanine--tRNA ligase from Vibrio vulnificus (strain YJ016).